Here is a 1697-residue protein sequence, read N- to C-terminus: Histone acetyltransferase HAC1 (1697 aa).

Residues 1–16 (MNVQAHMSGQVSNQGT) show a composition bias toward polar residues. Disordered regions lie at residues 1–45 (MNVQ…LGPS), 202–221 (SNFG…QRNT), 385–439 (SFQA…QQQR), 555–574 (HWQS…SNER), 583–631 (RMSG…GNRD), and 843–901 (IGIA…GKPE). 2 stretches are compositionally biased toward low complexity: residues 17-28 (MSQQNGNSQMQN) and 202-217 (SNFG…SMSS). Residues 385 to 398 (SFQAVSRTSSSLSH) are compositionally biased toward polar residues. The span at 399–439 (QQQQFQQQPNRFQQQPNQFHQQQQQFLHQQQLKQQSQQQQR) shows a compositional bias: low complexity. Composition is skewed to polar residues over residues 556 to 571 (WQSQ…NSMS) and 584 to 628 (MSGT…NGNG). The segment at 629 to 709 (NRDPRFKNQQ…EPNCPVCIPV (81 aa)) adopts a TAZ-type 1 zinc-finger fold. Residues 873–901 (TKVEKEPESLKKENLAESTEHTSKSGKPE) are compositionally biased toward basic and acidic residues. Residues 989–1066 (HYFCIPCYNE…EYTCPYCFIA (78 aa)) form a PHD-type zinc finger. The CBP/p300-type HAT domain occupies 1081–1517 (VLGAKDLPRT…VLYHLHNPTA (437 aa)). Acetyl-CoA contacts are provided by residues 1204–1206 (LDS), 1223–1224 (RT), and W1279. 2 consecutive ZZ-type zinc fingers follow at residues 1399-1462 (HLQP…IMDI) and 1519-1572 (AFVT…SLAD). C1404, C1407, C1419, C1422, C1428, C1431, H1444, H1452, C1524, C1527, C1539, C1542, C1548, C1551, H1560, and H1562 together coordinate Zn(2+). The TAZ-type 2 zinc-finger motif lies at 1579–1662 (EARQLRVLQL…ECHVPRCRDL (84 aa)).

In terms of tissue distribution, rosette leaves, stems and flowers.

It is found in the nucleus. It catalyses the reaction L-lysyl-[protein] + acetyl-CoA = N(6)-acetyl-L-lysyl-[protein] + CoA + H(+). Acetyltransferase enzyme. Acetylates histones, giving a specific tag for transcriptional activation. This is Histone acetyltransferase HAC1 (HAC1) from Arabidopsis thaliana (Mouse-ear cress).